The chain runs to 199 residues: Probable DNA-directed RNA polymerase subunit delta (199 aa).

The region spanning 14-81 is the HTH HARE-type domain; that stretch reads LSLIEVAHAI…GDNMWGLRAW (68 aa). Composition is skewed to acidic residues over residues 116-147, 157-171, and 182-199; these read GDDD…DTDD, AGVD…DETL, and LNDD…DESK. The interval 116 to 199 is disordered; that stretch reads GDDDDVIDYD…DYDDEDDESK (84 aa).

Belongs to the RpoE family. In terms of assembly, RNAP is composed of a core of 2 alpha, a beta and a beta' subunits. The core is associated with a delta subunit and one of several sigma factors.

Participates in both the initiation and recycling phases of transcription. In the presence of the delta subunit, RNAP displays an increased specificity of transcription, a decreased affinity for nucleic acids, and an increased efficiency of RNA synthesis because of enhanced recycling. The chain is Probable DNA-directed RNA polymerase subunit delta from Lactiplantibacillus plantarum (strain ATCC BAA-793 / NCIMB 8826 / WCFS1) (Lactobacillus plantarum).